Reading from the N-terminus, the 506-residue chain is Tabersonine 6,7-epoxidase isoform 1 (506 aa).

Residues 1–21 (MEFVVSLFAFVVSCFILLKVA) traverse the membrane as a helical segment. 2 N-linked (GlcNAc...) asparagine glycosylation sites follow: N173 and N261. A heme-binding site is contributed by C441.

The protein belongs to the cytochrome P450 family. Requires heme as cofactor. As to expression, mainly expressed in roots.

Its subcellular location is the endoplasmic reticulum membrane. The catalysed reaction is (-)-tabersonine + reduced [NADPH--hemoprotein reductase] + O2 = lochnericine + oxidized [NADPH--hemoprotein reductase] + H2O + H(+). It participates in alkaloid biosynthesis. Its function is as follows. Component of the monoterpenoid indole alkaloids (MIAs, e.g. echitovenine, tabersonine, lochnericine, 19-hydroxytabersonine and horhammericine) biosynthetic pathway; MIAs are used in cancer treatment and other medical applications. Cytochrome P450 catalyzing the conversion of tabersonine to lochnericine. The chain is Tabersonine 6,7-epoxidase isoform 1 from Catharanthus roseus (Madagascar periwinkle).